A 490-amino-acid polypeptide reads, in one-letter code: Glutamyl-tRNA(Gln) amidotransferase subunit A (490 aa).

Residues K80 and S155 each act as charge relay system in the active site. S179 acts as the Acyl-ester intermediate in catalysis.

It belongs to the amidase family. GatA subfamily. Heterotrimer of A, B and C subunits.

The enzyme catalyses L-glutamyl-tRNA(Gln) + L-glutamine + ATP + H2O = L-glutaminyl-tRNA(Gln) + L-glutamate + ADP + phosphate + H(+). Functionally, allows the formation of correctly charged Gln-tRNA(Gln) through the transamidation of misacylated Glu-tRNA(Gln) in organisms which lack glutaminyl-tRNA synthetase. The reaction takes place in the presence of glutamine and ATP through an activated gamma-phospho-Glu-tRNA(Gln). In Brevibacillus brevis (strain 47 / JCM 6285 / NBRC 100599), this protein is Glutamyl-tRNA(Gln) amidotransferase subunit A.